Here is a 353-residue protein sequence, read N- to C-terminus: Holliday junction branch migration complex subunit RuvB (353 aa).

The large ATPase domain (RuvB-L) stretch occupies residues 4–186 (ADRLIAATHS…FGIVQRLEFY (183 aa)). ATP-binding positions include I25, R26, G67, K70, T71, T72, 133 to 135 (EDF), R176, Y186, and R223. A Mg(2+)-binding site is contributed by T71. Residues 187 to 257 (STADLATIVS…VADLALNLLD (71 aa)) are small ATPAse domain (RuvB-S). The segment at 260 to 353 (EHGFDHQDRR…VDEFLDAVDD (94 aa)) is head domain (RuvB-H). DNA-binding residues include R296, R315, and R320.

It belongs to the RuvB family. In terms of assembly, homohexamer. Forms an RuvA(8)-RuvB(12)-Holliday junction (HJ) complex. HJ DNA is sandwiched between 2 RuvA tetramers; dsDNA enters through RuvA and exits via RuvB. An RuvB hexamer assembles on each DNA strand where it exits the tetramer. Each RuvB hexamer is contacted by two RuvA subunits (via domain III) on 2 adjacent RuvB subunits; this complex drives branch migration. In the full resolvosome a probable DNA-RuvA(4)-RuvB(12)-RuvC(2) complex forms which resolves the HJ.

It is found in the cytoplasm. The catalysed reaction is ATP + H2O = ADP + phosphate + H(+). Functionally, the RuvA-RuvB-RuvC complex processes Holliday junction (HJ) DNA during genetic recombination and DNA repair, while the RuvA-RuvB complex plays an important role in the rescue of blocked DNA replication forks via replication fork reversal (RFR). RuvA specifically binds to HJ cruciform DNA, conferring on it an open structure. The RuvB hexamer acts as an ATP-dependent pump, pulling dsDNA into and through the RuvAB complex. RuvB forms 2 homohexamers on either side of HJ DNA bound by 1 or 2 RuvA tetramers; 4 subunits per hexamer contact DNA at a time. Coordinated motions by a converter formed by DNA-disengaged RuvB subunits stimulates ATP hydrolysis and nucleotide exchange. Immobilization of the converter enables RuvB to convert the ATP-contained energy into a lever motion, pulling 2 nucleotides of DNA out of the RuvA tetramer per ATP hydrolyzed, thus driving DNA branch migration. The RuvB motors rotate together with the DNA substrate, which together with the progressing nucleotide cycle form the mechanistic basis for DNA recombination by continuous HJ branch migration. Branch migration allows RuvC to scan DNA until it finds its consensus sequence, where it cleaves and resolves cruciform DNA. This Pseudomonas fluorescens (strain Pf0-1) protein is Holliday junction branch migration complex subunit RuvB.